Consider the following 1368-residue polypeptide: DNA-directed RNA polymerase subunit beta (1368 aa).

The protein belongs to the RNA polymerase beta chain family. The RNAP catalytic core consists of 2 alpha, 1 beta, 1 beta' and 1 omega subunit. When a sigma factor is associated with the core the holoenzyme is formed, which can initiate transcription.

It carries out the reaction RNA(n) + a ribonucleoside 5'-triphosphate = RNA(n+1) + diphosphate. DNA-dependent RNA polymerase catalyzes the transcription of DNA into RNA using the four ribonucleoside triphosphates as substrates. The polypeptide is DNA-directed RNA polymerase subunit beta (Burkholderia multivorans (strain ATCC 17616 / 249)).